The following is a 240-amino-acid chain: UDP-2,3-diacylglucosamine hydrolase (240 aa).

Mn(2+) is bound by residues Asp7, His9, Asp40, Asn78, and His113. 78–79 is a substrate binding site; sequence NR. Residues Asp121, Ser159, Thr163, Lys166, and His194 each contribute to the substrate site. Mn(2+) contacts are provided by His194 and His196.

This sequence belongs to the LpxH family. It depends on Mn(2+) as a cofactor.

It localises to the cell inner membrane. It catalyses the reaction UDP-2-N,3-O-bis[(3R)-3-hydroxytetradecanoyl]-alpha-D-glucosamine + H2O = 2-N,3-O-bis[(3R)-3-hydroxytetradecanoyl]-alpha-D-glucosaminyl 1-phosphate + UMP + 2 H(+). Its pathway is glycolipid biosynthesis; lipid IV(A) biosynthesis; lipid IV(A) from (3R)-3-hydroxytetradecanoyl-[acyl-carrier-protein] and UDP-N-acetyl-alpha-D-glucosamine: step 4/6. In terms of biological role, hydrolyzes the pyrophosphate bond of UDP-2,3-diacylglucosamine to yield 2,3-diacylglucosamine 1-phosphate (lipid X) and UMP by catalyzing the attack of water at the alpha-P atom. Involved in the biosynthesis of lipid A, a phosphorylated glycolipid that anchors the lipopolysaccharide to the outer membrane of the cell. This Pseudomonas putida (strain W619) protein is UDP-2,3-diacylglucosamine hydrolase.